The chain runs to 68 residues: DNA-directed RNA polymerase subunit omega (68 aa).

The protein belongs to the RNA polymerase subunit omega family. The RNAP catalytic core consists of 2 alpha, 1 beta, 1 beta' and 1 omega subunit. When a sigma factor is associated with the core the holoenzyme is formed, which can initiate transcription.

The enzyme catalyses RNA(n) + a ribonucleoside 5'-triphosphate = RNA(n+1) + diphosphate. Functionally, promotes RNA polymerase assembly. Latches the N- and C-terminal regions of the beta' subunit thereby facilitating its interaction with the beta and alpha subunits. This chain is DNA-directed RNA polymerase subunit omega, found in Chromobacterium violaceum (strain ATCC 12472 / DSM 30191 / JCM 1249 / CCUG 213 / NBRC 12614 / NCIMB 9131 / NCTC 9757 / MK).